A 277-amino-acid chain; its full sequence is Phosphoribosylaminoimidazole-succinocarboxamide synthase (277 aa).

The protein belongs to the SAICAR synthetase family.

The catalysed reaction is 5-amino-1-(5-phospho-D-ribosyl)imidazole-4-carboxylate + L-aspartate + ATP = (2S)-2-[5-amino-1-(5-phospho-beta-D-ribosyl)imidazole-4-carboxamido]succinate + ADP + phosphate + 2 H(+). It functions in the pathway purine metabolism; IMP biosynthesis via de novo pathway; 5-amino-1-(5-phospho-D-ribosyl)imidazole-4-carboxamide from 5-amino-1-(5-phospho-D-ribosyl)imidazole-4-carboxylate: step 1/2. The protein is Phosphoribosylaminoimidazole-succinocarboxamide synthase of Salinispora tropica (strain ATCC BAA-916 / DSM 44818 / JCM 13857 / NBRC 105044 / CNB-440).